Here is a 267-residue protein sequence, read N- to C-terminus: Putative B3 domain-containing protein LOC_Os07g12820 (267 aa).

The segment at residues proline 4 to glutamate 99 is a DNA-binding region (TF-B3).

It localises to the nucleus. In Oryza sativa subsp. japonica (Rice), this protein is Putative B3 domain-containing protein LOC_Os07g12820.